Reading from the N-terminus, the 51-residue chain is Insulin (51 aa).

Intrachain disulfides connect Cys7-Cys37, Cys19-Cys50, and Cys36-Cys41.

This sequence belongs to the insulin family. As to quaternary structure, heterodimer of a B chain and an A chain linked by two disulfide bonds.

Its subcellular location is the secreted. In terms of biological role, insulin decreases blood glucose concentration. It increases cell permeability to monosaccharides, amino acids and fatty acids. It accelerates glycolysis, the pentose phosphate cycle, and glycogen synthesis in liver. The polypeptide is Insulin (INS) (Saimiri sciureus (Common squirrel monkey)).